Consider the following 440-residue polypeptide: Trigger factor (440 aa).

The 86-residue stretch at 163–248 (NDTVSINFKG…INSIKEKVLP (86 aa)) folds into the PPIase FKBP-type domain.

This sequence belongs to the FKBP-type PPIase family. Tig subfamily.

It localises to the cytoplasm. The enzyme catalyses [protein]-peptidylproline (omega=180) = [protein]-peptidylproline (omega=0). Involved in protein export. Acts as a chaperone by maintaining the newly synthesized protein in an open conformation. Functions as a peptidyl-prolyl cis-trans isomerase. This chain is Trigger factor, found in Finegoldia magna (strain ATCC 29328 / DSM 20472 / WAL 2508) (Peptostreptococcus magnus).